The primary structure comprises 439 residues: Arginine biosynthesis bifunctional protein ArgJ, mitochondrial (439 aa).

Substrate is bound by residues threonine 175, lysine 201, threonine 212, glutamate 301, asparagine 434, and serine 439. Residue threonine 212 is the Nucleophile of the active site.

It belongs to the ArgJ family. As to quaternary structure, heterodimer of an alpha and a beta chain. In terms of processing, the alpha and beta chains are autoproteolytically processed from a single precursor protein within the mitochondrion.

It localises to the mitochondrion matrix. It carries out the reaction N(2)-acetyl-L-ornithine + L-glutamate = N-acetyl-L-glutamate + L-ornithine. The enzyme catalyses L-glutamate + acetyl-CoA = N-acetyl-L-glutamate + CoA + H(+). It functions in the pathway amino-acid biosynthesis; L-arginine biosynthesis; L-ornithine and N-acetyl-L-glutamate from L-glutamate and N(2)-acetyl-L-ornithine (cyclic): step 1/1. It participates in amino-acid biosynthesis; L-arginine biosynthesis; N(2)-acetyl-L-ornithine from L-glutamate: step 1/4. Functionally, catalyzes two activities which are involved in the cyclic version of arginine biosynthesis: the synthesis of acetylglutamate from glutamate and acetyl-CoA, and of ornithine by transacetylation between acetylornithine and glutamate. This is Arginine biosynthesis bifunctional protein ArgJ, mitochondrial from Candida albicans (strain WO-1) (Yeast).